A 130-amino-acid chain; its full sequence is Small ribosomal subunit protein uS9 (130 aa).

Belongs to the universal ribosomal protein uS9 family.

The chain is Small ribosomal subunit protein uS9 from Anoxybacillus flavithermus (strain DSM 21510 / WK1).